The following is a 336-amino-acid chain: Flavonol synthase/flavanone 3-hydroxylase (336 aa).

Residues 99-118 (EKESVAKPEDSKDIEGYGTK) are disordered. The Fe2OG dioxygenase domain maps to 196-296 (MAEYMMKINY…RMSWPVFLEP (101 aa)). 204–206 (NYY) serves as a coordination point for 2-oxoglutarate. Fe cation contacts are provided by His-221, Asp-223, and His-277. 287 to 289 (RMS) is a 2-oxoglutarate binding site.

This sequence belongs to the iron/ascorbate-dependent oxidoreductase family. It depends on L-ascorbate as a cofactor. Requires Fe(2+) as cofactor. In terms of tissue distribution, expressed in young seedlings (at protein level). Expressed in roots, emerging leaves, shoot-root transition zone, trichomes, flowers and siliques. In cotyledons, expressed mostly on the adaxial side and only in guard cells on the abaxial side.

The protein localises to the cytoplasm. It is found in the nucleus. The catalysed reaction is a (2R,3R)-dihydroflavonol + 2-oxoglutarate + O2 = a flavonol + succinate + CO2 + H2O. The enzyme catalyses a (2S)-flavan-4-one + 2-oxoglutarate + O2 = a (2R,3R)-dihydroflavonol + succinate + CO2. It functions in the pathway secondary metabolite biosynthesis; flavonoid biosynthesis. Its function is as follows. Catalyzes the formation of flavonols from dihydroflavonols. It can act on dihydrokaempferol to produce kaempferol, on dihydroquercetin to produce quercitin and on dihydromyricetin to produce myricetin. In vitro catalyzes the oxidation of both enantiomers of naringenin to give both cis- and trans-dihydrokaempferol. The polypeptide is Flavonol synthase/flavanone 3-hydroxylase (FLS1) (Arabidopsis thaliana (Mouse-ear cress)).